A 360-amino-acid chain; its full sequence is Putative mRNA-decapping protein (360 aa).

A CCHC-type zinc finger spans residues 11–28; sequence HICSNCGRSGHEFRNCIE. In terms of domain architecture, Nudix hydrolase spans 163–347; the sequence is YKYDNILYHF…KKRILTRVYL (185 aa). The short motif at 242-264 is the Nudix box element; it reads GRRDKRSEENMVCACREFEEETG. E249 is a Mg(2+) binding site. The active-site Nucleophile is the E258. E262 serves as a coordination point for Mg(2+).

The protein belongs to the Nudix hydrolase family. DIPP subfamily. The cofactor is Mg(2+). It depends on Mn(2+) as a cofactor.

It catalyses the reaction diphospho-myo-inositol polyphosphate + H2O = myo-inositol polyphosphate + phosphate.. Might function as a decapping enzyme required for the removal of the 5'-end m7GpppN cap tethered to viral and host mRNAs to allow their decay in cells. In addition to the mRNA cap, probably also efficiently hydrolyzes diphosphoinositol polyphosphates. In Acanthamoeba polyphaga (Amoeba), this protein is Putative mRNA-decapping protein.